A 244-amino-acid polypeptide reads, in one-letter code: 5-oxoprolinase subunit A (244 aa).

The protein belongs to the LamB/PxpA family. Forms a complex composed of PxpA, PxpB and PxpC.

The catalysed reaction is 5-oxo-L-proline + ATP + 2 H2O = L-glutamate + ADP + phosphate + H(+). Functionally, catalyzes the cleavage of 5-oxoproline to form L-glutamate coupled to the hydrolysis of ATP to ADP and inorganic phosphate. The protein is 5-oxoprolinase subunit A of Salmonella heidelberg (strain SL476).